The following is a 207-amino-acid chain: Transcription antitermination protein NusB (207 aa).

It belongs to the NusB family.

Its function is as follows. Involved in transcription antitermination. Required for transcription of ribosomal RNA (rRNA) genes. Binds specifically to the boxA antiterminator sequence of the ribosomal RNA (rrn) operons. This Trichodesmium erythraeum (strain IMS101) protein is Transcription antitermination protein NusB.